A 511-amino-acid chain; its full sequence is Immunoglobulin-binding protein EibD (511 aa).

The first 26 residues, 1–26 (MSKKFTMTLLSSSLAGLLVMSGGVSA), serve as a signal peptide directing secretion. The interval 27 to 417 (QNGTYSVLQD…SKAIAANTRT (391 aa)) is surface exposed passenger domain. Over 27–460 (QNGTYSVLQD…GLFQPYSVGK (434 aa)) the chain is Extracellular. The interval 161 to 287 (DAKASGEFSV…TGTESDKTYG (127 aa)) is head domain. The tract at residues 288-303 (TRVLGGLSDGTRNSDA) is neck. Residues 304 to 349 (ATVGQLNRKVGGVYDDVKARITVESEKQKKYTDQKTSEVNEKVEAR) are right-handed coiled-coil (RHcc). Residues 304-349 (ATVGQLNRKVGGVYDDVKARITVESEKQKKYTDQKTSEVNEKVEAR) adopt a coiled-coil conformation. Positions 329–344 (EKQKKYTDQKTSEVNE) are required to bind IgA. The saddle domain stretch occupies residues 350 to 375 (TTVGVDSDGKLTRAEGATKTIAVNDG). The stretch at 376–441 (LVALSGRTDR…INENHKEMKR (66 aa)) forms a coiled coil. The interval 376–441 (LVALSGRTDR…INENHKEMKR (66 aa)) is left-handed coiled-coil (LHcc). Positions 384-418 (DRIDYAVGAIDGRVTRNTQSIEKNSKAIAANTRTL) are required to bind IgG. The tract at residues 418–460 (LQQHSARLDSQQRQINENHKEMKRAAAQSAALTGLFQPYSVGK) is outer membrane translocation of the passenger domain. 4 beta stranded membrane passes run 461–471 (FNATAAVGGYS), 474–485 (QALAVGVGYRFN), 488–497 (TAAKAGVAFS), and 501–511 (ASWNVGVNFEF). Residues 461 to 511 (FNATAAVGGYSDQQALAVGVGYRFNEQTAAKAGVAFSDGDASWNVGVNFEF) are translocator domain.

It belongs to the autotransporter-2 (AT-2) (TC 1.B.40) family. Eib subfamily. In terms of assembly, homotrimer; can probably form mixed heterotrimers in vivo. Will form mixed heterotrimers with EibA or EibC; these are correctly located in the outer membrane and bind IgG Fc, although less well than homotrimers. In denaturing gels runs as a band of about 210 kDa. Binds the Fc portion of immunoglobulins; binds more than 1 Fc per subunit, can be modeled to bind 3 Fc per trimer.

It is found in the cell surface. The protein localises to the cell outer membrane. Its function is as follows. Binds (in a non-immune fashion) to the Fc portion of human IgA and IgG; binding occurs on the cell surface. Confers the ability to survive exposure to human serum exposure. Binds to the Fc portion of human IgG, IgA and to whole mouse antibodies also via Fc. Upon overexpression cells acquire an extra cell surface layer that forms a zipper-like contact between cells; cells autoagglutinate and form biofilm more readily, suggesting it may play a role in defense against a host. The polypeptide is Immunoglobulin-binding protein EibD (Escherichia coli).